The following is a 166-amino-acid chain: MIIMGIDPGFAITGYGVVKYEGNKFSVLDYNAITTVASMKFSDRLLVLYNELEKLINKFRPDAISIEELFFNKNIKTALTVGHGRGVAVLAAAKSGIDIFEYTPLQVKQSVVGYGRAEKAQVQQMVKAILNLPAIPKPDDVADALAVAICHGNSHRMGALLGNDRF.

Active-site residues include Asp7, Glu67, and Asp140. The Mg(2+) site is built by Asp7, Glu67, and Asp140.

Belongs to the RuvC family. Homodimer which binds Holliday junction (HJ) DNA. The HJ becomes 2-fold symmetrical on binding to RuvC with unstacked arms; it has a different conformation from HJ DNA in complex with RuvA. In the full resolvosome a probable DNA-RuvA(4)-RuvB(12)-RuvC(2) complex forms which resolves the HJ. Mg(2+) serves as cofactor.

The protein resides in the cytoplasm. The enzyme catalyses Endonucleolytic cleavage at a junction such as a reciprocal single-stranded crossover between two homologous DNA duplexes (Holliday junction).. Functionally, the RuvA-RuvB-RuvC complex processes Holliday junction (HJ) DNA during genetic recombination and DNA repair. Endonuclease that resolves HJ intermediates. Cleaves cruciform DNA by making single-stranded nicks across the HJ at symmetrical positions within the homologous arms, yielding a 5'-phosphate and a 3'-hydroxyl group; requires a central core of homology in the junction. The consensus cleavage sequence is 5'-(A/T)TT(C/G)-3'. Cleavage occurs on the 3'-side of the TT dinucleotide at the point of strand exchange. HJ branch migration catalyzed by RuvA-RuvB allows RuvC to scan DNA until it finds its consensus sequence, where it cleaves and resolves the cruciform DNA. The polypeptide is Crossover junction endodeoxyribonuclease RuvC (Ruminiclostridium cellulolyticum (strain ATCC 35319 / DSM 5812 / JCM 6584 / H10) (Clostridium cellulolyticum)).